We begin with the raw amino-acid sequence, 152 residues long: Globin, minor (152 aa).

The Globin domain maps to Val12–Leu152. His104 provides a ligand contact to heme b.

Belongs to the globin family.

The chain is Globin, minor from Anadara trapezia (Sydney cockle).